The primary structure comprises 286 residues: Aldo-keto reductase MAV_4483 (286 aa).

Catalysis depends on Tyr61, which acts as the Proton donor. The NADPH site is built by Leu201, Val203, Val239, Arg241, Ser242, Arg247, and Asn251.

Belongs to the aldo/keto reductase family.

The polypeptide is Aldo-keto reductase MAV_4483 (Mycobacterium avium (strain 104)).